The sequence spans 498 residues: Ribulose bisphosphate carboxylase large chain (498 aa).

A propeptide spanning residues 1–2 is cleaved from the precursor; that stretch reads MS. Proline 3 carries the N-acetylproline modification. An N6,N6,N6-trimethyllysine modification is found at lysine 14. Substrate contacts are provided by asparagine 123 and threonine 173. The Proton acceptor role is filled by lysine 175. Lysine 177 is a binding site for substrate. Residues lysine 201, aspartate 203, and glutamate 204 each coordinate Mg(2+). The residue at position 201 (lysine 201) is an N6-carboxylysine. The active-site Proton acceptor is the histidine 294. Arginine 295, histidine 327, and serine 379 together coordinate substrate. Residues 471–498 are disordered; that stretch reads PVDTLDPNDKKQRDNEDTLADKLFGDKG.

It belongs to the RuBisCO large chain family. Type I subfamily. As to quaternary structure, heterohexadecamer of 8 large chains and 8 small chains; disulfide-linked. The disulfide link is formed within the large subunit homodimers. It depends on Mg(2+) as a cofactor. The disulfide bond which can form in the large chain dimeric partners within the hexadecamer appears to be associated with oxidative stress and protein turnover.

It localises to the plastid. It carries out the reaction 2 (2R)-3-phosphoglycerate + 2 H(+) = D-ribulose 1,5-bisphosphate + CO2 + H2O. It catalyses the reaction D-ribulose 1,5-bisphosphate + O2 = 2-phosphoglycolate + (2R)-3-phosphoglycerate + 2 H(+). Its function is as follows. RuBisCO catalyzes two reactions: the carboxylation of D-ribulose 1,5-bisphosphate, the primary event in carbon dioxide fixation, as well as the oxidative fragmentation of the pentose substrate in the photorespiration process. Both reactions occur simultaneously and in competition at the same active site. In Cuscuta reflexa (Southern Asian dodder), this protein is Ribulose bisphosphate carboxylase large chain (rbcL).